A 144-amino-acid polypeptide reads, in one-letter code: 3-dehydroquinate dehydratase (144 aa).

Tyrosine 23 (proton acceptor) is an active-site residue. Residues asparagine 74, histidine 80, and aspartate 87 each coordinate substrate. Histidine 100 serves as the catalytic Proton donor. Substrate-binding positions include leucine 101–serine 102 and arginine 111.

Belongs to the type-II 3-dehydroquinase family. As to quaternary structure, homododecamer.

It catalyses the reaction 3-dehydroquinate = 3-dehydroshikimate + H2O. It functions in the pathway metabolic intermediate biosynthesis; chorismate biosynthesis; chorismate from D-erythrose 4-phosphate and phosphoenolpyruvate: step 3/7. In terms of biological role, catalyzes a trans-dehydration via an enolate intermediate. This is 3-dehydroquinate dehydratase from Hydrogenovibrio crunogenus (strain DSM 25203 / XCL-2) (Thiomicrospira crunogena).